A 161-amino-acid chain; its full sequence is Small ribosomal subunit protein uS8m (161 aa).

The protein belongs to the universal ribosomal protein uS8 family. Component of the mitochondrial small ribosomal subunit (mt-SSU). Mature N.crassa 74S mitochondrial ribosomes consist of a small (37S) and a large (54S) subunit. The 37S small subunit contains a 16S ribosomal RNA (16S mt-rRNA) and 32 different proteins. The 54S large subunit contains a 23S rRNA (23S mt-rRNA) and 42 different proteins.

Its subcellular location is the mitochondrion. Functionally, component of the mitochondrial ribosome (mitoribosome), a dedicated translation machinery responsible for the synthesis of mitochondrial genome-encoded proteins, including at least some of the essential transmembrane subunits of the mitochondrial respiratory chain. The mitoribosomes are attached to the mitochondrial inner membrane and translation products are cotranslationally integrated into the membrane. The protein is Small ribosomal subunit protein uS8m (mrps8) of Neurospora crassa (strain ATCC 24698 / 74-OR23-1A / CBS 708.71 / DSM 1257 / FGSC 987).